We begin with the raw amino-acid sequence, 274 residues long: ATP synthase subunit delta (274 aa).

Belongs to the ATPase delta chain family. F-type ATPases have 2 components, F(1) - the catalytic core - and F(0) - the membrane proton channel. F(1) has five subunits: alpha(3), beta(3), gamma(1), delta(1), epsilon(1). F(0) has three main subunits: a(1), b(2) and c(10-14). The alpha and beta chains form an alternating ring which encloses part of the gamma chain. F(1) is attached to F(0) by a central stalk formed by the gamma and epsilon chains, while a peripheral stalk is formed by the delta and b chains.

The protein resides in the cell membrane. In terms of biological role, f(1)F(0) ATP synthase produces ATP from ADP in the presence of a proton or sodium gradient. F-type ATPases consist of two structural domains, F(1) containing the extramembraneous catalytic core and F(0) containing the membrane proton channel, linked together by a central stalk and a peripheral stalk. During catalysis, ATP synthesis in the catalytic domain of F(1) is coupled via a rotary mechanism of the central stalk subunits to proton translocation. Its function is as follows. This protein is part of the stalk that links CF(0) to CF(1). It either transmits conformational changes from CF(0) to CF(1) or is implicated in proton conduction. This Salinispora arenicola (strain CNS-205) protein is ATP synthase subunit delta.